Consider the following 325-residue polypeptide: Acetyl-coenzyme A carboxylase carboxyl transferase subunit alpha (325 aa).

Positions 38 to 292 (RLEERLSKLQ…DGILKETLKS (255 aa)) constitute a CoA carboxyltransferase C-terminal domain.

It belongs to the AccA family. In terms of assembly, acetyl-CoA carboxylase is a heterohexamer composed of biotin carboxyl carrier protein (AccB), biotin carboxylase (AccC) and two subunits each of ACCase subunit alpha (AccA) and ACCase subunit beta (AccD).

It is found in the cytoplasm. The enzyme catalyses N(6)-carboxybiotinyl-L-lysyl-[protein] + acetyl-CoA = N(6)-biotinyl-L-lysyl-[protein] + malonyl-CoA. It participates in lipid metabolism; malonyl-CoA biosynthesis; malonyl-CoA from acetyl-CoA: step 1/1. Its function is as follows. Component of the acetyl coenzyme A carboxylase (ACC) complex. First, biotin carboxylase catalyzes the carboxylation of biotin on its carrier protein (BCCP) and then the CO(2) group is transferred by the carboxyltransferase to acetyl-CoA to form malonyl-CoA. The protein is Acetyl-coenzyme A carboxylase carboxyl transferase subunit alpha of Bacillus velezensis (strain DSM 23117 / BGSC 10A6 / LMG 26770 / FZB42) (Bacillus amyloliquefaciens subsp. plantarum).